Here is a 117-residue protein sequence, read N- to C-terminus: Large ribosomal subunit protein uL18 (117 aa).

Belongs to the universal ribosomal protein uL18 family. In terms of assembly, part of the 50S ribosomal subunit; part of the 5S rRNA/L5/L18/L25 subcomplex. Contacts the 5S and 23S rRNAs.

In terms of biological role, this is one of the proteins that bind and probably mediate the attachment of the 5S RNA into the large ribosomal subunit, where it forms part of the central protuberance. This is Large ribosomal subunit protein uL18 from Vibrio proteolyticus (Aeromonas proteolytica).